Here is a 370-residue protein sequence, read N- to C-terminus: MDFIRSEILGTKFETTIRYANVRPVGLGAFGLVCSAYDQITQQSVAIKKMMSPFASSAIAKRTYREVKLLKKLRHENLIGLCDIFISPLEDIYLVTELLGTDLSRLLRSKPLENKFAQFFMYQLMRGLKYIHSAGVIHRDLKPSNLLINENCDLKICDFGLARVQEPRMTGYVSTRYYRAPEIMLTWQRYGVEVDIWSAGCILAEMLRGVPLFPGKDHINQFYLITDMIGNPPLEVIEKITSKNTRHIVDSLPHKEPRQLKTIFNEEDAEAVDLLEKMLLFDQSKRISAAESLEHPYLAPYHDPTDEPVAEEKFDWSFNDADLPKESWKYMIYSEVLDFHSMEAHSSGYMTQDDFASVLEFVDQNQFAET.

One can recognise a Protein kinase domain in the interval 19–298 (YANVRPVGLG…AAESLEHPYL (280 aa)). Residues 25–33 (VGLGAFGLV) and Lys48 each bind ATP. Asp140 functions as the Proton acceptor in the catalytic mechanism. The residue at position 170 (Thr170) is a Phosphothreonine. The short motif at 170-172 (TGY) is the TXY element. Phosphotyrosine is present on Tyr172.

Belongs to the protein kinase superfamily. Ser/Thr protein kinase family. MAP kinase subfamily. HOG1 sub-subfamily. Mg(2+) serves as cofactor. Post-translationally, dually phosphorylated on Thr-170 and Tyr-172, which activates the enzyme.

It catalyses the reaction L-seryl-[protein] + ATP = O-phospho-L-seryl-[protein] + ADP + H(+). The enzyme catalyses L-threonyl-[protein] + ATP = O-phospho-L-threonyl-[protein] + ADP + H(+). Activated by tyrosine and threonine phosphorylation. Its function is as follows. Mitogen-activated protein kinase required for growth on media where sorbitol or mannitol is the sole carbon source. This Aspergillus terreus (strain NIH 2624 / FGSC A1156) protein is Mitogen-activated protein kinase mpkC (mpkC).